Reading from the N-terminus, the 417-residue chain is Fructose-1,6-bisphosphatase 1, chloroplastic (417 aa).

Residues 1–59 (MAATAATTTSSHLLLSSSRHVASSSQPSILSPRSLFSNNGKRAPTGVRNHQYASGVRCM) constitute a chloroplast transit peptide. Positions 24-35 (SSQPSILSPRSL) are enriched in low complexity. Positions 24–48 (SSQPSILSPRSLFSNNGKRAPTGVR) are disordered. Ala60 carries the post-translational modification N-acetylalanine. Mg(2+) contacts are provided by Glu138, Glu167, Asp188, Leu190, and Asp191. 191 to 194 (DGSS) is a substrate binding site. The cysteines at positions 233 and 238 are disulfide-linked. The substrate site is built by Asn297, Tyr329, Tyr347, Tyr349, and Lys359. Glu365 contacts Mg(2+).

The protein belongs to the FBPase class 1 family. In terms of assembly, homotetramer. Mg(2+) is required as a cofactor.

The protein localises to the plastid. It localises to the chloroplast stroma. It carries out the reaction beta-D-fructose 1,6-bisphosphate + H2O = beta-D-fructose 6-phosphate + phosphate. It functions in the pathway carbohydrate biosynthesis; Calvin cycle. Catalyzes the irreversible reaction from fructose-1,6-bisphosphate to fructose-6-phosphate and inorganic phosphate, to regenerate the primary CO(2) acceptor molecule, ribulose-1,5-bisphosphate. Involved in the regulation of photosynthetic electron flow and sucrose synthesis. Its activity is critical for normal plant development and important for the regulation of a wide range of metabolic processes. The chain is Fructose-1,6-bisphosphatase 1, chloroplastic from Arabidopsis thaliana (Mouse-ear cress).